The primary structure comprises 297 residues: Protein phosphatase PTC7 homolog (297 aa).

Residues 1-27 constitute a mitochondrion transit peptide; that stretch reads MFSVLSCGRLVARAVFGGLSQTDSRDY. One can recognise a PPM-type phosphatase domain in the interval 28–292; that stretch reads SLVTASCGFG…DDITVLLSIV (265 aa). Mn(2+)-binding residues include Asp71, Gly72, and Asp216.

The protein belongs to the PP2C family. Mg(2+) is required as a cofactor. It depends on Mn(2+) as a cofactor.

The protein localises to the mitochondrion matrix. The enzyme catalyses O-phospho-L-seryl-[protein] + H2O = L-seryl-[protein] + phosphate. It carries out the reaction O-phospho-L-threonyl-[protein] + H2O = L-threonyl-[protein] + phosphate. Functionally, protein phosphatase which positively regulates biosynthesis of the ubiquinone, coenzyme Q. Dephosphorylates the ubiquinone biosynthesis protein coq7 which is likely to lead to its activation. The polypeptide is Protein phosphatase PTC7 homolog (pptc7) (Xenopus laevis (African clawed frog)).